The sequence spans 291 residues: Kidney mitochondrial carrier protein 1 (291 aa).

Position 2 is an N-acetylserine (Ser2). Solcar repeat units lie at residues 7–96 (KPFV…LKRL), 104–189 (ETLL…TKKH), and 198–289 (DTVS…LKKL). The next 6 helical transmembrane spans lie at 9–26 (FVYG…TFPI), 71–89 (GIAP…KIGT), 106–124 (LLIN…SAIA), 164–183 (GVSL…LPVY), 204–224 (FLSS…VDVV), and 264–283 (GFWP…FLTY).

This sequence belongs to the mitochondrial carrier (TC 2.A.29) family. As to quaternary structure, interacts with VDAC1.

It localises to the mitochondrion inner membrane. The enzyme catalyses sulfite(in) + sulfate(out) = sulfite(out) + sulfate(in). The catalysed reaction is thiosulfate(in) + sulfate(out) = thiosulfate(out) + sulfate(in). It carries out the reaction sulfate(out) + phosphate(in) = sulfate(in) + phosphate(out). It catalyses the reaction oxalate(in) + sulfate(out) = oxalate(out) + sulfate(in). The enzyme catalyses malonate(in) + sulfate(out) = malonate(out) + sulfate(in). The catalysed reaction is maleate(in) + sulfate(out) = maleate(out) + sulfate(in). It carries out the reaction (S)-malate(in) + sulfate(out) = (S)-malate(out) + sulfate(in). It catalyses the reaction (3S)-citramalate(in) + sulfate(out) = (3S)-citramalate(out) + sulfate(in). The enzyme catalyses (3R)-citramalate(in) + sulfate(out) = (3R)-citramalate(out) + sulfate(in). The catalysed reaction is sulfate(out) + succinate(in) = sulfate(in) + succinate(out). It carries out the reaction (S,S)-tartrate(in) + sulfate(out) = (S,S)-tartrate(out) + sulfate(in). It catalyses the reaction (2R,3R)-tartrate(in) + sulfate(out) = (2R,3R)-tartrate(out) + sulfate(in). The enzyme catalyses D-aspartate(in) + sulfate(out) = D-aspartate(out) + sulfate(in). The catalysed reaction is L-aspartate(in) + sulfate(out) = L-aspartate(out) + sulfate(in). It carries out the reaction sulfate(in) = sulfate(out). It catalyses the reaction phosphate(in) = phosphate(out). The enzyme catalyses (S)-malate(out) = (S)-malate(in). Functionally, antiporter that transports inorganic anions (sulfate, sulfite, thiosulfate and phosphate) and, to a lesser extent, a variety of dicarboxylates (e.g. malonate, malate and citramalate) and, even more so, aspartate. The sulfate/sulfate exchange is much higher than the phosphate/phosphate and malate/malate exchanges. The transport affinities is higher for sulfate and thiosulfate than for any other substrate. May catalyze the export of sulfite and thiosulfate (the hydrogen sulfide degradation products) from the mitochondria, thereby modulating the level of the hydrogen sulfide. Also may mediate a very low unidirectional transport of sulfate, phosphate and (S)-malate. The sequence is that of Kidney mitochondrial carrier protein 1 from Rattus norvegicus (Rat).